The following is a 187-amino-acid chain: uncharacterized protein (187 aa).

Positions 1–95 (MTTMKRSADP…GSTRPSARYG (95 aa)) are disordered. Positions 46-80 (RARRSRGPKRFLGKRNYRRARARKPGKRDRAHSSK) are enriched in basic residues.

The protein resides in the mitochondrion. This is an uncharacterized protein from Arabidopsis thaliana (Mouse-ear cress).